The chain runs to 226 residues: UPF0758 protein CHY_0341 (226 aa).

The region spanning 104–226 is the MPN domain; it reads NFLNPDDVYN…YISMKAERLF (123 aa). Zn(2+)-binding residues include His175, His177, and Asp188. The short motif at 175–188 is the JAMM motif element; the sequence is HNHPSGDPTPSKED.

Belongs to the UPF0758 family.

This Carboxydothermus hydrogenoformans (strain ATCC BAA-161 / DSM 6008 / Z-2901) protein is UPF0758 protein CHY_0341.